Consider the following 207-residue polypeptide: Macrophage immunometabolism regulator (207 aa).

The residue at position 1 (Met1) is an N-acetylmethionine. The interval Met1–Cys41 is disordered. Ser25, Ser140, and Ser167 each carry phosphoserine.

This sequence belongs to the UNC119-binding protein family. As to quaternary structure, interacts with UNC119 and UNC119B; interaction preferentially takes place when UNC119 and UNC119B are unliganded with myristoylated proteins.

It is found in the cytoplasm. The protein localises to the cell projection. It localises to the cilium. In terms of biological role, regulates the macrophage function, by enhancing the resolution of inflammation and wound repair functions mediated by M2 macrophages. The regulation of macrophage function is, due at least in part, to its ability to inhibit glycolysis. May play also a role in trafficking of proteins via its interaction with UNC119 and UNC119B cargo adapters: may help the release of UNC119 and UNC119B cargo or the recycling of UNC119 and UNC119B. May play a role in ciliary membrane localization via its interaction with UNC119B and protein transport into photoreceptor cells. In Bos taurus (Bovine), this protein is Macrophage immunometabolism regulator (MACIR).